Reading from the N-terminus, the 108-residue chain is UPF0060 membrane protein CJA_3703 (108 aa).

Helical transmembrane passes span 6 to 26 (LLFV…YLWL), 31 to 51 (SIWL…LLTL), 61 to 81 (AAYG…VDGV), and 85 to 105 (AYDW…AMGW).

This sequence belongs to the UPF0060 family.

It is found in the cell inner membrane. The chain is UPF0060 membrane protein CJA_3703 from Cellvibrio japonicus (strain Ueda107) (Pseudomonas fluorescens subsp. cellulosa).